The sequence spans 215 residues: UPF0502 protein YceH (215 aa).

Lys-80 carries the post-translational modification N6-acetyllysine.

Belongs to the UPF0502 family.

This chain is UPF0502 protein YceH, found in Shigella sonnei (strain Ss046).